Consider the following 222-residue polypeptide: UPF0758 protein Lcho_0695 (222 aa).

In terms of domain architecture, MPN spans 100–222 (VFDSPQAVRD…VVSFAERGLL (123 aa)). Zn(2+)-binding residues include His171, His173, and Asp184. Residues 171–184 (HNHPSGVAEPSRAD) carry the JAMM motif motif.

It belongs to the UPF0758 family.

This is UPF0758 protein Lcho_0695 from Leptothrix cholodnii (strain ATCC 51168 / LMG 8142 / SP-6) (Leptothrix discophora (strain SP-6)).